The following is a 231-amino-acid chain: Elongation factor 1-delta 2 (231 aa).

Ala2 carries the post-translational modification N-acetylalanine. The GST C-terminal domain occupies Ser11 to Gly73. Positions Ser82–Lys136 are disordered. Positions Ala102–Glu118 are enriched in acidic residues. Over residues Glu119–Ala129 the composition is skewed to basic and acidic residues.

It belongs to the EF-1-beta/EF-1-delta family. As to quaternary structure, EF-1 is composed of 4 subunits: alpha, beta (1B-alpha=beta'), delta (1B-beta), and gamma (1B-gamma).

Its function is as follows. EF-1-beta and EF-1-delta stimulate the exchange of GDP bound to EF-1-alpha to GTP. The polypeptide is Elongation factor 1-delta 2 (Arabidopsis thaliana (Mouse-ear cress)).